Consider the following 2022-residue polypeptide: Transient receptor potential cation channel subfamily M member 6 (2022 aa).

At 1–741 (MKEQPVLERL…MWMGRLKMRK (741 aa)) the chain is on the cytoplasmic side. The chain crosses the membrane as a helical span at residues 742–762 (NSWLKIIISIILPPTILTLEF). The Extracellular segment spans residues 763–841 (KSKAEMSHVP…YEFYSAPIVK (79 aa)). The chain crosses the membrane as a helical span at residues 842 to 862 (FWFYTMAYLAFLMLFTYTVLV). The Cytoplasmic segment spans residues 863 to 905 (EMQPQPSVQEWLVSIYIFTNAIEVVREICISEPGKFTQKVKVW). Residues 906 to 926 (ISEYWNLTETVAIGLFSAGFV) form a helical membrane-spanning segment. Residues 927–939 (LRWGDPPFHTAGR) are Extracellular-facing. A helical transmembrane segment spans residues 940–960 (LIYCIDIIFWFSRLLDFFAVN). Residues 961-972 (QHAGPYVTMIAK) are Cytoplasmic-facing. The helical transmembrane segment at 973–993 (MTANMFYIVIIMAIVLLSFGV) threads the bilayer. Over 994 to 1012 (ARKAILSPKEPPSWSLARD) the chain is Extracellular. An intramembrane region (pore-forming) is located at residues 1013 to 1033 (IVFEPYWMIYGEVYAGEIDVC). At 1034–1047 (SSQPSCPPGSFLTP) the chain is on the extracellular side. The helical transmembrane segment at 1048–1068 (FLQAVYLFVQYIIMVNLLIAF) threads the bilayer. Topologically, residues 1069–2022 (FNNVYLDMES…RNSPEDDMQL (954 aa)) are cytoplasmic. The tract at residues 1479–1516 (TCDSDSSRSEQHQKQAQDSSLSDNSTRSAQSSECSEVG) is disordered. Over residues 1483–1493 (DSSRSEQHQKQ) the composition is skewed to basic and acidic residues. The segment covering 1494 to 1512 (AQDSSLSDNSTRSAQSSEC) has biased composition (polar residues). Residues 1750-1980 (NLDKSMSSWS…CCRKLKLPDL (231 aa)) form the Alpha-type protein kinase domain. ADP contacts are provided by Gly-1777, Gly-1778, Leu-1779, Arg-1780, and Lys-1804. Phosphothreonine; by autocatalysis is present on Thr-1851. Positions 1876 and 1879 each coordinate ADP. His-1909 provides a ligand contact to Zn(2+). Asp-1923 acts as the Proton acceptor in catalysis. Position 1933 (Asp-1933) interacts with ADP. Zn(2+) contacts are provided by His-1966, Cys-1968, and Cys-1972. Residues 1997–2022 (EIKIESAEEPPARETGRNSPEDDMQL) are disordered. Positions 1998–2016 (IKIESAEEPPARETGRNSP) are enriched in basic and acidic residues.

It in the C-terminal section; belongs to the protein kinase superfamily. Alpha-type protein kinase family. ALPK subfamily. In the N-terminal section; belongs to the transient receptor (TC 1.A.4) family. LTrpC subfamily. TRPM6 sub-subfamily. Homomers. Forms heteromers with TRPM7; TRPM6 increases the current amplitude of TRPM6/7 heteromers as compared to TRPM7 homomer. Interacts (via kinase domain) with RACK1. Post-translationally, autophosphorylated; autophosphorylation controlls the protein kinase activity of TRPM6 towards their substrates. Autophosphorylation of Thr-1851 in the kinase domain is essential for the inhibitory effect of RACK1. In terms of processing, the C-terminus of TRPM6 is proteolytically cleaved in vivo, in a cell type-specific fashion, releasing the kinase module from the transmembrane domain. The cleaved kinase fragments are translocated to the nucleus to phosphorylate histones and regulate gene expression. As to expression, highly expressed in kidney and colon. Isoform TRPM6a and isoform TRPM6b, are coexpressed with TRPM7 in kidney, and testis, and are also found in several cell lines of lung origin. Isoform TRPM6c is detected only in testis and in NCI-H510A small cell lung carcinoma cells.

The protein resides in the cell membrane. The protein localises to the apical cell membrane. It localises to the nucleus. The enzyme catalyses L-seryl-[protein] + ATP = O-phospho-L-seryl-[protein] + ADP + H(+). The catalysed reaction is L-threonyl-[protein] + ATP = O-phospho-L-threonyl-[protein] + ADP + H(+). It carries out the reaction Mg(2+)(in) = Mg(2+)(out). It catalyses the reaction Ca(2+)(in) = Ca(2+)(out). The enzyme catalyses Zn(2+)(in) = Zn(2+)(out). Strongly inhibited by intracellular Mg(2+); unlikely to be active at physiological levels of intracellular Mg(2+). In the heteromeric TRPM6-TRPM7 channels complexes, TRPM7 are able to offset the very high sensitivity of TRPM6 to cytosolic Mg(2+) to physiologically relevant concentrations, whereas TRPM6 relieve TRPM7 from the inhibitory action of Mg-ATP. Consequently, the association of TRPM6 with TRPM7 allow for high constitutive activity of TRPM6/7 in the presence of physiological levels of Mg(2+) and Mg-ATP. The kinase activity is controlled through the autophosphorylation of a serine/threonine-rich region located to the N-terminal of the catalytic domain. Bifunctional protein that combines an ion channel with an intrinsic kinase domain, enabling it to modulate cellular functions either by conducting ions through the pore or by phosphorylating downstream proteins via its kinase domain. Crucial for Mg(2+) homeostasis. Has an important role in epithelial Mg(2+) transport and in the active Mg(2+) absorption in the gut and kidney. However, whether TRPM6 forms functional homomeric channels by itself or functions primarily as a subunit of heteromeric TRPM6-TRPM7 channels, is still under debate. Its function is as follows. The C-terminal kinase domain can be cleaved from the channel segment in a cell-type-specific fashion. The cleaved kinase fragments can translocate to the nucleus, and bind chromatin-remodeling complex proteins to ultimately phosphorylate specific Ser/Thr residues of histones known to be functionally important for cell differentiation and development. The chain is Transient receptor potential cation channel subfamily M member 6 (TRPM6) from Homo sapiens (Human).